Consider the following 349-residue polypeptide: Phosphoribosylformylglycinamidine cyclo-ligase (349 aa).

Belongs to the AIR synthase family.

Its subcellular location is the cytoplasm. The enzyme catalyses 2-formamido-N(1)-(5-O-phospho-beta-D-ribosyl)acetamidine + ATP = 5-amino-1-(5-phospho-beta-D-ribosyl)imidazole + ADP + phosphate + H(+). It participates in purine metabolism; IMP biosynthesis via de novo pathway; 5-amino-1-(5-phospho-D-ribosyl)imidazole from N(2)-formyl-N(1)-(5-phospho-D-ribosyl)glycinamide: step 2/2. This is Phosphoribosylformylglycinamidine cyclo-ligase from Bordetella parapertussis (strain 12822 / ATCC BAA-587 / NCTC 13253).